We begin with the raw amino-acid sequence, 57 residues long: UPF0509 protein YciZ (57 aa).

This sequence belongs to the UPF0509 family.

The polypeptide is UPF0509 protein YciZ (yciZ) (Escherichia coli O157:H7).